A 108-amino-acid chain; its full sequence is UPF0060 membrane protein YnfA (108 aa).

At 1 to 5 the chain is on the periplasmic side; it reads MLKTT. Residues 6 to 26 traverse the membrane as a helical segment; it reads LLFFVTALCEIIGCFLPWLWI. Topologically, residues 27-30 are cytoplasmic; sequence KRGA. Residues 31–51 form a helical membrane-spanning segment; sequence SVWWLLPAAASLALFVWLLTL. At 52 to 60 the chain is on the periplasmic side; that stretch reads HPAASGRVY. The helical transmembrane segment at 61 to 81 threads the bilayer; the sequence is AAYGGVYVCTALLWLRVVDGV. The Cytoplasmic segment spans residues 82 to 84; that stretch reads RLT. A helical transmembrane segment spans residues 85-105; sequence VYDWSGALIALCGMLIIVVGW. The Periplasmic segment spans residues 106-108; the sequence is GRT.

It belongs to the UPF0060 family.

The protein localises to the cell inner membrane. The sequence is that of UPF0060 membrane protein YnfA from Salmonella typhi.